The primary structure comprises 160 residues: Dysbindin domain-containing protein 1 (160 aa).

Phosphoserine is present on residues Ser3, Ser97, and Ser121. Positions 95–160 (ADSDDENLAT…FLTVEEPKED (66 aa)) are disordered. Basic and acidic residues predominate over residues 127-143 (TRAEQNREKQPPSDPER).

Belongs to the dysbindin family.

The chain is Dysbindin domain-containing protein 1 (Dbndd1) from Mus musculus (Mouse).